We begin with the raw amino-acid sequence, 394 residues long: uncharacterized protein (394 aa).

It belongs to the mycobacterial PPE family.

This is an uncharacterized protein from Mycobacterium tuberculosis (strain CDC 1551 / Oshkosh).